Reading from the N-terminus, the 330-residue chain is Ketol-acid reductoisomerase (NADP(+)) (330 aa).

The KARI N-terminal Rossmann domain maps to 1–181; it reads MNVYYEQDAD…GGTKAGVIET (181 aa). Residues 24-27, arginine 47, serine 50, serine 52, and 82-85 each bind NADP(+); these read YGSQ and DQNQ. Residue histidine 107 is part of the active site. Glycine 133 contacts NADP(+). In terms of domain architecture, KARI C-terminal knotted spans 182-327; that stretch reads SIKNETETDL…AKLRDMMSWL (146 aa). Aspartate 190, glutamate 194, glutamate 226, and glutamate 230 together coordinate Mg(2+). Serine 251 is a substrate binding site.

The protein belongs to the ketol-acid reductoisomerase family. The cofactor is Mg(2+).

The enzyme catalyses (2R)-2,3-dihydroxy-3-methylbutanoate + NADP(+) = (2S)-2-acetolactate + NADPH + H(+). It carries out the reaction (2R,3R)-2,3-dihydroxy-3-methylpentanoate + NADP(+) = (S)-2-ethyl-2-hydroxy-3-oxobutanoate + NADPH + H(+). It participates in amino-acid biosynthesis; L-isoleucine biosynthesis; L-isoleucine from 2-oxobutanoate: step 2/4. Its pathway is amino-acid biosynthesis; L-valine biosynthesis; L-valine from pyruvate: step 2/4. Involved in the biosynthesis of branched-chain amino acids (BCAA). Catalyzes an alkyl-migration followed by a ketol-acid reduction of (S)-2-acetolactate (S2AL) to yield (R)-2,3-dihydroxy-isovalerate. In the isomerase reaction, S2AL is rearranged via a Mg-dependent methyl migration to produce 3-hydroxy-3-methyl-2-ketobutyrate (HMKB). In the reductase reaction, this 2-ketoacid undergoes a metal-dependent reduction by NADPH to yield (R)-2,3-dihydroxy-isovalerate. The polypeptide is Ketol-acid reductoisomerase (NADP(+)) (Pelodictyon phaeoclathratiforme (strain DSM 5477 / BU-1)).